The sequence spans 1612 residues: MNLLRKKVKNEKSLSTLLINEEENKNIEMTTLKDKKEMKNENLSKINVKKENHDKNHDKNHDKNHDKNHDKNHDKNHDKNHDKNHDKNHDKNHVKNNVEYYNDVFTHLYNCDDGGEEPKEYSHKKKQVNNKKKWKKQYKAVKLYMNMFLNNYKLKKGKGNCKNLSSVKKRRKKKKIIQNDYIRIINAEKEYVQKYHEDKIFLDNIKNVSSCELIKDCSYSVFFYNLFIKGLYLNKQNLEHATEKEHIQKNITKNITKNELHINKTSEHVSNITKLKKNYNKHNVILFKGKYTRQLICDYLKFLLNSIQNEHTIKAHFYILDYVNDLENKKKEMAKKIKMESFIFTNSNEEDKLCKDIILNCNILNEQKEDDNKSDNPLYSNNNTLKEQNTSTPLPSHEIQTESMNSPNLLNVKNMNQTKDDNGCTKEEIIKSNNLMKTYDIKINEHIYNKILNNFISELKSFFFSILEKIRSSKLLLRFIVTLSEICLILTPHYVNIINFIEILCDFGHIIPIHYISHFIHFFQCNKNIFIQKYKEFQHCIINNDPIKIQSVGARLIGFIKILQKKIHLNNNEQSMYSFFLNLLLSECLPINHLGFCNRQSAKNNFHYFFQESLDCCYKKFKEEQILYDNFELNIQNNIKNYKKIKTIIEHEIELNSDKYLIKEEDENFISAKNVISDEQDGEDTLYKKRKREEFKETSLTKKKQKKKNDEIKKTGEEKKKTGEEKKKTGEEKKKTGEEKKKTGEEKKKTGEEKKKTGEEKKKTGEEKKKTGEEKKLTNDVTHLTNDVTHLTNDVTHLTNDVTHLTNDVTHLTNDVTHLTNDVTHLTNDVTHLTNDVTHLTNDVTHLTNDVTHLTNDVTHLTNEKYIEEKDTKEMYLSYMSFISLVAFIKYPEIITQDNIILVEDVYNSFKTFLNYINSLEKEKKENFKRTKKYMNMIKAYLFNDHIDILANVHIFKVLVYDENFLRVLFFNILVVLNYLNRELQICVKDDNELDNNNNKNNNNNKNNNNNKNNNNNNNNNNNNNNNNDNGVKKNDPAIISPRSSFLFFVEYDKNDDHELGDPEKINNHLNGLMTRGHQKSIRENIKNKESGKSSILTTGTSNNNNNVNNMNNNMNNNMNNNMNNHMNSNNNVVDSNSTNFKENVKNKDNSNNRNMSVNQNILHNKTKDIKFCKENDDKFVIKEKIKKIMFTFVKELLNYLDGFINSNHNFMLAKEYSWYVWKKQLNVAKYNKDDYDISFKFKCIDENIKEQNYDINQTTNNNTYNNQTSNHMNENLHTDESSKSNNNQDKTVYTNEVSYLPNIPKKNKKTDNQSPVQTLINIIQNFELLNKKMKPFYCNNKNKNKNKNKNKNKNMEQINNKDITMNLCNNNNNIIHNKEQDNIQQHDDNNIINTNNDQSSYNNDIFHINNFLLEINKIYLRREAEFWELDESDSLTDEKKNDSNKKILIEKLIDKLDDYKKKINIDNDPINEIEENEKSKNNPVFKFRLSKLFILKYIDLYTIVKNKEFTTDCDFLYNLMIQMDKNVEKKKSLLNKGVVENDEDINVEHHINMEDEKNEKLNDKEGEYEDVTENLNEQEAEEEAEEEAEEEEEEEDKFLTPEHLPINVEIK.

Residues 23–52 (ENKNIEMTTLKDKKEMKNENLSKINVKKEN) are a coiled coil. Over residues 46-93 (INVKKENHDKNHDKNHDKNHDKNHDKNHDKNHDKNHDKNHDKNHDKNH) the composition is skewed to basic and acidic residues. Disordered regions lie at residues 46-94 (INVK…KNHV) and 369-400 (EDDNKSDNPLYSNNNTLKEQNTSTPLPSHEIQ). A compositionally biased stretch (polar residues) spans 375-394 (DNPLYSNNNTLKEQNTSTPL). The helical transmembrane segment at 479-499 (FIVTLSEICLILTPHYVNIIN) threads the bilayer. Disordered regions lie at residues 698–777 (TSLT…EKKL), 992–1037 (NELD…KNDP), 1091–1157 (SGKS…RNMS), and 1257–1291 (NQTTNNNTYNNQTSNHMNENLHTDESSKSNNNQDK). Basic and acidic residues predominate over residues 708–777 (KNDEIKKTGE…KKKTGEEKKL (70 aa)). 3 stretches are compositionally biased toward low complexity: residues 996-1028 (NNNNKNNNNNKNNNNNKNNNNNNNNNNNNNNNN), 1102-1140 (SNNNNNVNNMNNNMNNNMNNNMNNHMNSNNNVVDSNSTN), and 1257-1271 (NQTTNNNTYNNQTSN). Coiled coils occupy residues 1338 to 1362 (YCNNKNKNKNKNKNKNKNMEQINNK), 1444 to 1469 (SNKKILIEKLIDKLDDYKKKINIDND), and 1553 to 1601 (NMED…KFLT). Basic and acidic residues predominate over residues 1554-1566 (MEDEKNEKLNDKE). The segment at 1554-1612 (MEDEKNEKLNDKEGEYEDVTENLNEQEAEEEAEEEAEEEEEEEDKFLTPEHLPINVEIK) is disordered. Over residues 1567 to 1597 (GEYEDVTENLNEQEAEEEAEEEAEEEEEEED) the composition is skewed to acidic residues.

Its subcellular location is the membrane. This is an uncharacterized protein from Plasmodium falciparum (isolate 3D7).